Reading from the N-terminus, the 138-residue chain is uncharacterized protein (138 aa).

The signal sequence occupies residues 1–37 (MNSTFTSQPLLNRSEPRVFKEFYRLVIGCNPAWQVMA).

This sequence to H.influenzae HI_1631.

This is an uncharacterized protein from Sinorhizobium fredii (strain NBRC 101917 / NGR234).